We begin with the raw amino-acid sequence, 279 residues long: Bifunctional protein FolD (279 aa).

Residues 165–167 (GRS), Ser190, and Ile231 contribute to the NADP(+) site.

The protein belongs to the tetrahydrofolate dehydrogenase/cyclohydrolase family. Homodimer.

The catalysed reaction is (6R)-5,10-methylene-5,6,7,8-tetrahydrofolate + NADP(+) = (6R)-5,10-methenyltetrahydrofolate + NADPH. It carries out the reaction (6R)-5,10-methenyltetrahydrofolate + H2O = (6R)-10-formyltetrahydrofolate + H(+). It functions in the pathway one-carbon metabolism; tetrahydrofolate interconversion. In terms of biological role, catalyzes the oxidation of 5,10-methylenetetrahydrofolate to 5,10-methenyltetrahydrofolate and then the hydrolysis of 5,10-methenyltetrahydrofolate to 10-formyltetrahydrofolate. This is Bifunctional protein FolD from Halalkalibacterium halodurans (strain ATCC BAA-125 / DSM 18197 / FERM 7344 / JCM 9153 / C-125) (Bacillus halodurans).